The following is a 141-amino-acid chain: Nucleoside diphosphate kinase (141 aa).

Residues Lys11, Phe59, Arg87, Thr93, Arg104, and Asn114 each coordinate ATP. Residue His117 is the Pros-phosphohistidine intermediate of the active site.

This sequence belongs to the NDK family. In terms of assembly, homotetramer. The cofactor is Mg(2+).

The protein resides in the cytoplasm. The enzyme catalyses a 2'-deoxyribonucleoside 5'-diphosphate + ATP = a 2'-deoxyribonucleoside 5'-triphosphate + ADP. It catalyses the reaction a ribonucleoside 5'-diphosphate + ATP = a ribonucleoside 5'-triphosphate + ADP. Its function is as follows. Major role in the synthesis of nucleoside triphosphates other than ATP. The ATP gamma phosphate is transferred to the NDP beta phosphate via a ping-pong mechanism, using a phosphorylated active-site intermediate. The protein is Nucleoside diphosphate kinase of Stenotrophomonas maltophilia (strain R551-3).